Reading from the N-terminus, the 594-residue chain is Arrestin domain-containing protein C584.15c (594 aa).

The span at 368-398 (NPQLQSGFTTPNLSRRNSSDFGPNSPVNIHS) shows a compositional bias: polar residues. 2 disordered regions span residues 368–417 (NPQL…NSNA) and 531–594 (EATR…RGVR). Residues 404 to 417 (SGQQPSSPASNSNA) are compositionally biased toward low complexity. A compositionally biased stretch (polar residues) spans 534–552 (RPSSPTESVEIPSNTTTIA). The span at 565 to 574 (PSTPAPPLPS) shows a compositional bias: pro residues. Position 584 is a phosphoserine (serine 584).

The protein belongs to the arrestin family.

The sequence is that of Arrestin domain-containing protein C584.15c from Schizosaccharomyces pombe (strain 972 / ATCC 24843) (Fission yeast).